The sequence spans 112 residues: Putative regulatory protein DP2861 (112 aa).

The protein belongs to the RemA family.

The polypeptide is Putative regulatory protein DP2861 (Desulfotalea psychrophila (strain LSv54 / DSM 12343)).